The following is a 1086-amino-acid chain: Phosphinothricin tripeptide synthetase PhsC (1086 aa).

The interval 22–43 (RLRAAAAPGPDPAIPRRPDDDG) is disordered. The interval 45 to 484 (VPLSFAQHRL…LAALPVLTRD (440 aa)) is condensation. The segment at 510 to 901 (LEDSARRHPD…GRTDHQVKLR (392 aa)) is adenylation. Residues 983-1007 (GKLDREALPDPLAQSGDTAGNRPPL) are disordered. One can recognise a Carrier domain in the interval 1006-1081 (PLLDPVEERI…GLARSVSAER (76 aa)). At Ser-1041 the chain carries O-(pantetheine 4'-phosphoryl)serine.

Belongs to the NRP synthetase family. Requires pantetheine 4'-phosphate as cofactor.

The catalysed reaction is holo-[peptidyl-carrier protein] + L-alanine + ATP = L-alanyl-[peptidyl-carrier protein] + AMP + diphosphate. The protein operates within secondary metabolite biosynthesis; bialaphos biosynthesis. Involved in the biosynthesis of phosphinothricin tripeptide (PTT), also known as bialaphos (BA), a natural-product antibiotic and potent herbicide. Adenylates L-alanine and loads it onto a peptidyl carrier domain via a thioester linkage to the phosphopanthetheine moiety. Shows weaker activity with aminobutyric acid and L-serine. The chain is Phosphinothricin tripeptide synthetase PhsC from Streptomyces viridochromogenes (strain DSM 40736 / JCM 4977 / BCRC 1201 / Tue 494).